We begin with the raw amino-acid sequence, 304 residues long: N-acetylmuramic acid 6-phosphate etherase (304 aa).

Residues 58–221 (IAERIHRGGR…STGVMIKLGK (164 aa)) form the SIS domain. Glu-86 serves as the catalytic Proton donor. Glu-117 is a catalytic residue.

The protein belongs to the GCKR-like family. MurNAc-6-P etherase subfamily. Homodimer.

It carries out the reaction N-acetyl-D-muramate 6-phosphate + H2O = N-acetyl-D-glucosamine 6-phosphate + (R)-lactate. The protein operates within amino-sugar metabolism; N-acetylmuramate degradation. Its function is as follows. Specifically catalyzes the cleavage of the D-lactyl ether substituent of MurNAc 6-phosphate, producing GlcNAc 6-phosphate and D-lactate. The chain is N-acetylmuramic acid 6-phosphate etherase from Clostridium beijerinckii (strain ATCC 51743 / NCIMB 8052) (Clostridium acetobutylicum).